We begin with the raw amino-acid sequence, 420 residues long: Glutamyl-tRNA reductase (420 aa).

Residues 49–52, Ser110, 115–117, and Gln121 each bind substrate; these read TCNR and EHQ. The active-site Nucleophile is the Cys50. 190–195 lines the NADP(+) pocket; the sequence is GSGTIN.

It belongs to the glutamyl-tRNA reductase family. Homodimer.

It carries out the reaction (S)-4-amino-5-oxopentanoate + tRNA(Glu) + NADP(+) = L-glutamyl-tRNA(Glu) + NADPH + H(+). Its pathway is porphyrin-containing compound metabolism; protoporphyrin-IX biosynthesis; 5-aminolevulinate from L-glutamyl-tRNA(Glu): step 1/2. Catalyzes the NADPH-dependent reduction of glutamyl-tRNA(Glu) to glutamate 1-semialdehyde (GSA). In Wigglesworthia glossinidia brevipalpis, this protein is Glutamyl-tRNA reductase.